A 200-amino-acid chain; its full sequence is Flavin prenyltransferase UbiX (200 aa).

FMN is bound by residues 15–17 (GAS), Thr-41, 102–105 (SMGT), and Arg-137. Residues Tyr-167 and Lys-183 each contribute to the dimethylallyl phosphate site.

This sequence belongs to the UbiX/PAD1 family.

The catalysed reaction is dimethylallyl phosphate + FMNH2 = prenylated FMNH2 + phosphate. Functionally, flavin prenyltransferase that catalyzes the synthesis of the prenylated FMN cofactor (prenyl-FMN) for 4-hydroxy-3-polyprenylbenzoic acid decarboxylase UbiD. The prenyltransferase is metal-independent and links a dimethylallyl moiety from dimethylallyl monophosphate (DMAP) to the flavin N5 and C6 atoms of FMN. The chain is Flavin prenyltransferase UbiX from Alkalihalophilus pseudofirmus (strain ATCC BAA-2126 / JCM 17055 / OF4) (Bacillus pseudofirmus).